Here is a 122-residue protein sequence, read N- to C-terminus: Large ribosomal subunit protein eL8 (122 aa).

It belongs to the eukaryotic ribosomal protein eL8 family. In terms of assembly, part of the 50S ribosomal subunit. Probably part of the RNase P complex.

The protein resides in the cytoplasm. Its function is as follows. Multifunctional RNA-binding protein that recognizes the K-turn motif in ribosomal RNA, the RNA component of RNase P, box H/ACA, box C/D and box C'/D' sRNAs. The sequence is that of Large ribosomal subunit protein eL8 from Methanothrix thermoacetophila (strain DSM 6194 / JCM 14653 / NBRC 101360 / PT) (Methanosaeta thermophila).